The following is a 145-amino-acid chain: Hemoglobin fetal subunit beta (145 aa).

The region spanning 1–145 (MLTAEEKASV…VANALAHRYH (145 aa)) is the Globin domain. Residues His62 and His91 each coordinate heme b.

It belongs to the globin family. In terms of assembly, heterotetramer of two alpha chains and two beta chains.

This chain is Hemoglobin fetal subunit beta, found in Ovis aries (Sheep).